The chain runs to 335 residues: Phosphate acyltransferase (335 aa).

It belongs to the PlsX family. As to quaternary structure, homodimer. Probably interacts with PlsY.

The protein resides in the cytoplasm. The enzyme catalyses a fatty acyl-[ACP] + phosphate = an acyl phosphate + holo-[ACP]. The protein operates within lipid metabolism; phospholipid metabolism. In terms of biological role, catalyzes the reversible formation of acyl-phosphate (acyl-PO(4)) from acyl-[acyl-carrier-protein] (acyl-ACP). This enzyme utilizes acyl-ACP as fatty acyl donor, but not acyl-CoA. The sequence is that of Phosphate acyltransferase from Streptococcus pyogenes serotype M1.